The sequence spans 117 residues: UPF0295 protein RBAM_008830 (117 aa).

Transmembrane regions (helical) follow at residues 13–33 and 41–61; these read TFAL…LFFK and LFMI…FWIG.

Belongs to the UPF0295 family.

The protein localises to the cell membrane. This Bacillus velezensis (strain DSM 23117 / BGSC 10A6 / LMG 26770 / FZB42) (Bacillus amyloliquefaciens subsp. plantarum) protein is UPF0295 protein RBAM_008830.